Here is a 45-residue protein sequence, read N- to C-terminus: Proteinase inhibitor IIA (45 aa).

Disulfide bonds link C10–C24, C14–C35, and C20–C43.

This sequence belongs to the protease inhibitor I20 (potato type II proteinase inhibitor) family.

Its subcellular location is the secreted. Its function is as follows. Inhibits trypsin strongly and chymotrypsin temporarily. This is Proteinase inhibitor IIA from Solanum tuberosum (Potato).